The sequence spans 330 residues: Phenylalanine--tRNA ligase alpha subunit (330 aa).

E255 serves as a coordination point for Mg(2+).

It belongs to the class-II aminoacyl-tRNA synthetase family. Phe-tRNA synthetase alpha subunit type 1 subfamily. Tetramer of two alpha and two beta subunits. Mg(2+) is required as a cofactor.

It localises to the cytoplasm. The catalysed reaction is tRNA(Phe) + L-phenylalanine + ATP = L-phenylalanyl-tRNA(Phe) + AMP + diphosphate + H(+). This chain is Phenylalanine--tRNA ligase alpha subunit, found in Acinetobacter baylyi (strain ATCC 33305 / BD413 / ADP1).